Consider the following 192-residue polypeptide: Ribosomal RNA large subunit methyltransferase E (192 aa).

S-adenosyl-L-methionine is bound by residues Gly-48, Phe-50, Asp-67, Asp-85, and Asp-107. Catalysis depends on Lys-147, which acts as the Proton acceptor.

It belongs to the class I-like SAM-binding methyltransferase superfamily. RNA methyltransferase RlmE family.

The protein resides in the cytoplasm. It carries out the reaction uridine(2552) in 23S rRNA + S-adenosyl-L-methionine = 2'-O-methyluridine(2552) in 23S rRNA + S-adenosyl-L-homocysteine + H(+). Specifically methylates the uridine in position 2552 of 23S rRNA at the 2'-O position of the ribose in the fully assembled 50S ribosomal subunit. In Borrelia garinii subsp. bavariensis (strain ATCC BAA-2496 / DSM 23469 / PBi) (Borreliella bavariensis), this protein is Ribosomal RNA large subunit methyltransferase E.